The primary structure comprises 148 residues: 3-dehydroquinate dehydratase (148 aa).

Tyr26 serves as the catalytic Proton acceptor. Residues Asn77, His83, and Asp90 each contribute to the substrate site. The active-site Proton donor is the His103. Substrate-binding positions include 104 to 105 and Arg114; that span reads LS.

This sequence belongs to the type-II 3-dehydroquinase family. Homododecamer.

The enzyme catalyses 3-dehydroquinate = 3-dehydroshikimate + H2O. Its pathway is metabolic intermediate biosynthesis; chorismate biosynthesis; chorismate from D-erythrose 4-phosphate and phosphoenolpyruvate: step 3/7. Functionally, catalyzes a trans-dehydration via an enolate intermediate. The chain is 3-dehydroquinate dehydratase from Chlorobaculum tepidum (strain ATCC 49652 / DSM 12025 / NBRC 103806 / TLS) (Chlorobium tepidum).